The primary structure comprises 1217 residues: DNA-directed RNA polymerase subunit beta' (1217 aa).

Cys-60, Cys-62, Cys-75, and Cys-78 together coordinate Zn(2+). Residues Asp-449, Asp-451, and Asp-453 each coordinate Mg(2+). Residues Cys-821, Cys-895, Cys-902, and Cys-905 each contribute to the Zn(2+) site.

This sequence belongs to the RNA polymerase beta' chain family. In terms of assembly, the RNAP catalytic core consists of 2 alpha, 1 beta, 1 beta' and 1 omega subunit. When a sigma factor is associated with the core the holoenzyme is formed, which can initiate transcription. The cofactor is Mg(2+). It depends on Zn(2+) as a cofactor.

The catalysed reaction is RNA(n) + a ribonucleoside 5'-triphosphate = RNA(n+1) + diphosphate. Its function is as follows. DNA-dependent RNA polymerase catalyzes the transcription of DNA into RNA using the four ribonucleoside triphosphates as substrates. This chain is DNA-directed RNA polymerase subunit beta', found in Lactobacillus acidophilus (strain ATCC 700396 / NCK56 / N2 / NCFM).